A 156-amino-acid polypeptide reads, in one-letter code: Nascent polypeptide-associated complex subunit beta (156 aa).

2 disordered regions span residues 1–42 and 129–156; these read MPID…KDDT and QANE…AEVE. Residues 38–103 form the NAC-A/B domain; it reads NKDDTKLHNQ…AQEKNLQELF (66 aa).

This sequence belongs to the NAC-beta family. As to quaternary structure, part of the nascent polypeptide-associated complex (NAC), consisting of EGD2 and EGD1. NAC associates with ribosomes via EGD1.

It localises to the cytoplasm. The protein resides in the nucleus. Component of the nascent polypeptide-associated complex (NAC), a dynamic component of the ribosomal exit tunnel, protecting the emerging polypeptides from interaction with other cytoplasmic proteins to ensure appropriate nascent protein targeting. The NAC complex also promotes mitochondrial protein import by enhancing productive ribosome interactions with the outer mitochondrial membrane and blocks the inappropriate interaction of ribosomes translating non-secretory nascent polypeptides with translocation sites in the membrane of the endoplasmic reticulum. EGD1 may act as a transcription factor that exert a negative effect on the expression of several genes that are transcribed by RNA polymerase II. The protein is Nascent polypeptide-associated complex subunit beta (EGD1) of Candida glabrata (strain ATCC 2001 / BCRC 20586 / JCM 3761 / NBRC 0622 / NRRL Y-65 / CBS 138) (Yeast).